Reading from the N-terminus, the 353-residue chain is 41 kDa protein (353 aa).

Residues 132-197 are disordered; the sequence is QSSHASALEQ…DNNSSDTIKD (66 aa). Residues 157-169 are compositionally biased toward basic and acidic residues; that stretch reads LDNKGKSDSENCN.

The protein is 41 kDa protein of Lactobacillus helveticus (Lactobacillus suntoryeus).